Reading from the N-terminus, the 85-residue chain is Homeobox protein knotted-1-like 5 (85 aa).

One can recognise an ELK domain in the interval 1–21 (ELKEMLLKKYSGCLSRLRSEF). The homeobox; TALE-type DNA-binding region spans 22-85 (LKKRKKGKLP…NQRKRHWKPS (64 aa)).

It belongs to the TALE/KNOX homeobox family. In terms of tissue distribution, strongly expressed in ear inflorescence primordia and shoot meristem. Weakly expressed in embryos. Absent from leaves.

It localises to the nucleus. Functionally, probably binds to the DNA sequence 5'-TGAC-3'. The chain is Homeobox protein knotted-1-like 5 (KNOX5) from Zea mays (Maize).